A 375-amino-acid chain; its full sequence is Alcohol dehydrogenase 1A (375 aa).

Ser2 is modified (N-acetylserine). Ser23 is modified (phosphoserine). A Zn(2+)-binding site is contributed by Cys47. NAD(+) is bound at residue 48–52; that stretch reads GTDDH. Residues His68, Cys98, Cys101, Cys104, Cys112, and Cys175 each contribute to the Zn(2+) site. Residues 200–205, Asp224, Lys229, Ile270, 293–295, 318–320, and Arg370 each bind NAD(+); these read GLGGVG, VGV, and AVL.

Belongs to the zinc-containing alcohol dehydrogenase family. In terms of assembly, dimer of identical or heterodimer of closely related subunits alpha, beta, or gamma that are encoded by genes ADH1A, ADH1B, and ADH1C, respectively. It depends on Zn(2+) as a cofactor.

The protein localises to the cytoplasm. It catalyses the reaction a primary alcohol + NAD(+) = an aldehyde + NADH + H(+). It carries out the reaction a secondary alcohol + NAD(+) = a ketone + NADH + H(+). The catalysed reaction is butan-1-ol + NAD(+) = butanal + NADH + H(+). The enzyme catalyses 1-propanol + NAD(+) = propanal + NADH + H(+). Functionally, alcohol dehydrogenase. Oxidizes primary as well as secondary alcohols. Ethanol is a very poor substrate. In Pongo abelii (Sumatran orangutan), this protein is Alcohol dehydrogenase 1A (ADH1A).